Consider the following 626-residue polypeptide: Trehalase (626 aa).

Residues 1 to 35 form the signal peptide; it reads MASSCSIRCGSRNILVNAAATFLALLVVLRCFANA. Over 36-595 the chain is Extracellular; that stretch reads EKPSPCQSDV…STPQPVVVST (560 aa). N-linked (GlcNAc...) asparagine glycosylation occurs at N104. Residues R181, 188–189, N225, and 234–236 contribute to the substrate site; these read WD and RSQ. N274 carries an N-linked (GlcNAc...) asparagine glycan. Substrate contacts are provided by residues 299 to 301 and G333; that span reads RPE. Residue D335 is the Proton donor/acceptor of the active site. 4 N-linked (GlcNAc...) asparagine glycosylation sites follow: N350, N384, N498, and N525. Catalysis depends on E532, which acts as the Proton donor/acceptor. A substrate-binding site is contributed by E547. A helical transmembrane segment spans residues 596 to 616; it reads AGQVMTGILALVISLAAGFIG. Over 617–626 the chain is Cytoplasmic; the sequence is KMRCANNAAQ.

Belongs to the glycosyl hydrolase 37 family. In terms of assembly, monomer. In terms of processing, glycosylated; contains 3.1% carbohydrates.

The protein resides in the membrane. It catalyses the reaction alpha,alpha-trehalose + H2O = alpha-D-glucose + beta-D-glucose. With respect to regulation, inhibited by sodium, potassium and ammonium ions, and by TEMED. This Apis mellifera (Honeybee) protein is Trehalase.